The following is a 155-amino-acid chain: Small ribosomal subunit protein uS7cz/uS7cy (155 aa).

This sequence belongs to the universal ribosomal protein uS7 family. In terms of assembly, part of the 30S ribosomal subunit.

The protein localises to the plastid. The protein resides in the chloroplast. In terms of biological role, one of the primary rRNA binding proteins, it binds directly to 16S rRNA where it nucleates assembly of the head domain of the 30S subunit. The sequence is that of Small ribosomal subunit protein uS7cz/uS7cy (rps7-A) from Psilotum nudum (Whisk fern).